A 352-amino-acid polypeptide reads, in one-letter code: rRNA 2'-O-methyltransferase fibrillarin (352 aa).

A disordered region spans residues 1–115 (MGRPEFNRGG…GGAGGMRGGK (115 aa)). Asymmetric dimethylarginine occurs at positions 8, 16, 19, 23, 27, 35, 43, 51, 55, 58, 63, 67, 70, 75, 81, 85, 91, 95, 98, 102, 105, and 112. Gly residues predominate over residues 8–18 (RGGGGGGFRGG). The segment covering 26 to 59 (SRGGFGGGGRGGYGGGDRGSFGGGDRGGFRGGRG) has biased composition (gly residues). A compositionally biased stretch (gly residues) spans 66 to 113 (FRGGRGGGDRGGFGGRGSPRGGFGGRGSPRGGRGSPRGGRGGAGGMRG). Residues 203–204 (TT), 222–223 (EF), 247–248 (DA), and 267–270 (DVAQ) each bind S-adenosyl-L-methionine.

The protein belongs to the methyltransferase superfamily. Fibrillarin family. In terms of assembly, component of box C/D small nucleolar ribonucleoprotein (snoRNP) particles. It is associated with the U3, U8 and U13 small nuclear RNAs. In terms of processing, by homology to other fibrillarins, some or all of the N-terminal domain arginines are modified to asymmetric dimethylarginine (DMA).

Its subcellular location is the nucleus. The protein localises to the nucleolus. It is found in the nucleoplasm. The catalysed reaction is L-glutaminyl-[histone H2A] + S-adenosyl-L-methionine = N(5)-methyl-L-glutaminyl-[histone H2A] + S-adenosyl-L-homocysteine + H(+). In terms of biological role, S-adenosyl-L-methionine-dependent methyltransferase that has the ability to methylate both RNAs and proteins. Involved in pre-rRNA processing. Utilizes the methyl donor S-adenosyl-L-methionine to catalyze the site-specific 2'-hydroxyl methylation of ribose moieties in pre-ribosomal RNA. Site specificity is provided by a guide RNA that base pairs with the substrate. Methylation occurs at a characteristic distance from the sequence involved in base pairing with the guide RNA. Also acts as a protein methyltransferase by mediating methylation of 'Gln-105' of histone H2A (H2AQ105me), a modification that impairs binding of the FACT complex and is specifically present at 35S ribosomal DNA locus. Plays a role in modulation of nucleolus size most likely through regulating the ribosomal RNA (rRNA) pool. This Caenorhabditis elegans protein is rRNA 2'-O-methyltransferase fibrillarin.